The chain runs to 562 residues: Dihydroxy-acid dehydratase (562 aa).

A Mg(2+)-binding site is contributed by Asp78. Cys119 is a [2Fe-2S] cluster binding site. Mg(2+)-binding residues include Asp120 and Lys121. N6-carboxylysine is present on Lys121. Cys192 serves as a coordination point for [2Fe-2S] cluster. Glu449 serves as a coordination point for Mg(2+). Ser475 serves as the catalytic Proton acceptor.

It belongs to the IlvD/Edd family. In terms of assembly, homodimer. Requires [2Fe-2S] cluster as cofactor. Mg(2+) is required as a cofactor.

The catalysed reaction is (2R)-2,3-dihydroxy-3-methylbutanoate = 3-methyl-2-oxobutanoate + H2O. The enzyme catalyses (2R,3R)-2,3-dihydroxy-3-methylpentanoate = (S)-3-methyl-2-oxopentanoate + H2O. Its pathway is amino-acid biosynthesis; L-isoleucine biosynthesis; L-isoleucine from 2-oxobutanoate: step 3/4. It functions in the pathway amino-acid biosynthesis; L-valine biosynthesis; L-valine from pyruvate: step 3/4. Functionally, functions in the biosynthesis of branched-chain amino acids. Catalyzes the dehydration of (2R,3R)-2,3-dihydroxy-3-methylpentanoate (2,3-dihydroxy-3-methylvalerate) into 2-oxo-3-methylpentanoate (2-oxo-3-methylvalerate) and of (2R)-2,3-dihydroxy-3-methylbutanoate (2,3-dihydroxyisovalerate) into 2-oxo-3-methylbutanoate (2-oxoisovalerate), the penultimate precursor to L-isoleucine and L-valine, respectively. This Aliarcobacter butzleri (strain RM4018) (Arcobacter butzleri) protein is Dihydroxy-acid dehydratase.